Reading from the N-terminus, the 532-residue chain is Exopolysaccharide phosphotransferase CpsY (532 aa).

Belongs to the stealth family.

In Mycobacterium bovis (strain ATCC BAA-935 / AF2122/97), this protein is Exopolysaccharide phosphotransferase CpsY (cpsY).